The chain runs to 192 residues: Phosphoheptose isomerase (192 aa).

The 156-residue stretch at 37–192 (LADSFKAGGK…IQLIEKEMVK (156 aa)) folds into the SIS domain. Residue 52–54 (NGG) participates in substrate binding. Residues histidine 61 and glutamate 65 each contribute to the Zn(2+) site. Substrate is bound by residues glutamate 65, 93 to 94 (ND), 119 to 121 (STS), serine 124, and glutamine 172. The Zn(2+) site is built by glutamine 172 and histidine 180.

It belongs to the SIS family. GmhA subfamily. In terms of assembly, homotetramer. Requires Zn(2+) as cofactor.

Its subcellular location is the cytoplasm. It carries out the reaction 2 D-sedoheptulose 7-phosphate = D-glycero-alpha-D-manno-heptose 7-phosphate + D-glycero-beta-D-manno-heptose 7-phosphate. The protein operates within carbohydrate biosynthesis; D-glycero-D-manno-heptose 7-phosphate biosynthesis; D-glycero-alpha-D-manno-heptose 7-phosphate and D-glycero-beta-D-manno-heptose 7-phosphate from sedoheptulose 7-phosphate: step 1/1. Its function is as follows. Catalyzes the isomerization of sedoheptulose 7-phosphate in D-glycero-D-manno-heptose 7-phosphate. The polypeptide is Phosphoheptose isomerase (Enterobacter sp. (strain 638)).